Reading from the N-terminus, the 231-residue chain is uncharacterized protein (231 aa).

The SWIM-type zinc finger occupies Tyr-43–Glu-76.

This is an uncharacterized protein from Methanocaldococcus jannaschii (strain ATCC 43067 / DSM 2661 / JAL-1 / JCM 10045 / NBRC 100440) (Methanococcus jannaschii).